Consider the following 90-residue polypeptide: Auxin-responsive protein SAUR23 (90 aa).

Belongs to the ARG7 family.

It localises to the cell membrane. Functionally, functions as a positive effector of cell expansion through modulation of auxin transport. In Arabidopsis thaliana (Mouse-ear cress), this protein is Auxin-responsive protein SAUR23.